The sequence spans 232 residues: Phosphatidylserine decarboxylase proenzyme (232 aa).

S190 functions as the Schiff-base intermediate with substrate; via pyruvic acid in the catalytic mechanism. At S190 the chain carries Pyruvic acid (Ser); by autocatalysis.

Belongs to the phosphatidylserine decarboxylase family. PSD-A subfamily. As to quaternary structure, heterodimer of a large membrane-associated beta subunit and a small pyruvoyl-containing alpha subunit. The cofactor is pyruvate. Is synthesized initially as an inactive proenzyme. Formation of the active enzyme involves a self-maturation process in which the active site pyruvoyl group is generated from an internal serine residue via an autocatalytic post-translational modification. Two non-identical subunits are generated from the proenzyme in this reaction, and the pyruvate is formed at the N-terminus of the alpha chain, which is derived from the carboxyl end of the proenzyme. The post-translation cleavage follows an unusual pathway, termed non-hydrolytic serinolysis, in which the side chain hydroxyl group of the serine supplies its oxygen atom to form the C-terminus of the beta chain, while the remainder of the serine residue undergoes an oxidative deamination to produce ammonia and the pyruvoyl prosthetic group on the alpha chain.

Its subcellular location is the cell membrane. The enzyme catalyses a 1,2-diacyl-sn-glycero-3-phospho-L-serine + H(+) = a 1,2-diacyl-sn-glycero-3-phosphoethanolamine + CO2. It participates in phospholipid metabolism; phosphatidylethanolamine biosynthesis; phosphatidylethanolamine from CDP-diacylglycerol: step 2/2. Functionally, catalyzes the formation of phosphatidylethanolamine (PtdEtn) from phosphatidylserine (PtdSer). This is Phosphatidylserine decarboxylase proenzyme from Rhodopseudomonas palustris (strain BisA53).